Here is a 437-residue protein sequence, read N- to C-terminus: GTPase Der (437 aa).

EngA-type G domains are found at residues 3-167 (NLVA…NKET) and 176-352 (PRFA…ENRT). GTP-binding positions include 9–16 (GRPNVGKS), 56–60 (DTGGW), 119–122 (NKTD), 182–189 (GRPNAGKS), 229–233 (DTAGI), and 294–297 (NKWD). Residues 353 to 437 (TKIPTARLNE…TPINIYIRQK (85 aa)) enclose the KH-like domain.

It belongs to the TRAFAC class TrmE-Era-EngA-EngB-Septin-like GTPase superfamily. EngA (Der) GTPase family. In terms of assembly, associates with the 50S ribosomal subunit.

Functionally, GTPase that plays an essential role in the late steps of ribosome biogenesis. This Bacteroides thetaiotaomicron (strain ATCC 29148 / DSM 2079 / JCM 5827 / CCUG 10774 / NCTC 10582 / VPI-5482 / E50) protein is GTPase Der.